We begin with the raw amino-acid sequence, 120 residues long: Protein VraC (120 aa).

The sequence is that of Protein VraC from Staphylococcus epidermidis (strain ATCC 12228 / FDA PCI 1200).